We begin with the raw amino-acid sequence, 295 residues long: Pyridoxal 5'-phosphate synthase subunit PdxS (295 aa).

Asp25 is a binding site for D-ribose 5-phosphate. The active-site Schiff-base intermediate with D-ribose 5-phosphate is the Lys82. Position 154 (Gly154) interacts with D-ribose 5-phosphate. Arg166 provides a ligand contact to D-glyceraldehyde 3-phosphate. D-ribose 5-phosphate contacts are provided by residues Gly215 and 236–237; that span reads GS.

The protein belongs to the PdxS/SNZ family. In terms of assembly, in the presence of PdxT, forms a dodecamer of heterodimers.

The enzyme catalyses aldehydo-D-ribose 5-phosphate + D-glyceraldehyde 3-phosphate + L-glutamine = pyridoxal 5'-phosphate + L-glutamate + phosphate + 3 H2O + H(+). The protein operates within cofactor biosynthesis; pyridoxal 5'-phosphate biosynthesis. In terms of biological role, catalyzes the formation of pyridoxal 5'-phosphate from ribose 5-phosphate (RBP), glyceraldehyde 3-phosphate (G3P) and ammonia. The ammonia is provided by the PdxT subunit. Can also use ribulose 5-phosphate and dihydroxyacetone phosphate as substrates, resulting from enzyme-catalyzed isomerization of RBP and G3P, respectively. The polypeptide is Pyridoxal 5'-phosphate synthase subunit PdxS (Dictyoglomus turgidum (strain DSM 6724 / Z-1310)).